Here is a 254-residue protein sequence, read N- to C-terminus: Alcohol dehydrogenase (254 aa).

10 to 33 (FVAGLGGIGLDTSRELVKRNLKNL) provides a ligand contact to NAD(+). S138 serves as a coordination point for substrate. Residue Y151 is the Proton acceptor of the active site.

This sequence belongs to the short-chain dehydrogenases/reductases (SDR) family. Homodimer.

The enzyme catalyses a primary alcohol + NAD(+) = an aldehyde + NADH + H(+). It carries out the reaction a secondary alcohol + NAD(+) = a ketone + NADH + H(+). The chain is Alcohol dehydrogenase (Adh) from Drosophila persimilis (Fruit fly).